The primary structure comprises 450 residues: Protein tweety homolog 1 (450 aa).

The Extracellular portion of the chain corresponds to 1-43; sequence MGAPPGYRPSAWVHLLHQLPRADFQLRPVPSGFAPRDQEYQQA. The chain crosses the membrane as a helical span at residues 44–64; it reads LLLVAALAGLGLGLSLIFIAV. Over 65 to 88 the chain is Cytoplasmic; the sequence is YLIRFCCCRPPEPPGAKSPPPGGG. The helical transmembrane segment at 89-109 threads the bilayer; the sequence is CVTWSCIAALLVGCAGIGIGF. Residues 110–214 lie on the Extracellular side of the membrane; that stretch reads YGNSETSDGV…DVTFVEEYRW (105 aa). A glycan (N-linked (GlcNAc...) asparagine) is linked at Asn130. A helical membrane pass occupies residues 215–235; sequence LAYVLLLLLVLLVCLFTLLGL. Topologically, residues 236–240 are cytoplasmic; it reads AKQSK. Residues 241–261 form a helical membrane-spanning segment; sequence WLVVVMTAMSLLVLVLSWGSM. Topologically, residues 262-390 are extracellular; sequence GLEAATAVGL…LRGLCEDALE (129 aa). Cystine bridges form between Cys275/Cys385 and Cys303/Cys370. 2 N-linked (GlcNAc...) asparagine glycosylation sites follow: Asn284 and Asn355. Residues 391–411 form a helical membrane-spanning segment; that stretch reads GLLFLMLFSLLSAGALATTLC. Topologically, residues 412–450 are cytoplasmic; sequence SLPRAWALFPPSDDYDDTDDDDPFNPQESKRFVQWQSSI. A disordered region spans residues 428–450; it reads DTDDDDPFNPQESKRFVQWQSSI. Ser440 bears the Phosphoserine mark.

It belongs to the tweety family. Homotetramer; disulfide-linked. Homodimer. N-glycosylated. Contains high-mannose, hybrid and complex oligosaccharides.

It is found in the cell membrane. It carries out the reaction chloride(in) = chloride(out). It catalyses the reaction L-glutamate(out) = L-glutamate(in). Calcium-independent, swelling-dependent volume-regulated anion channel (VRAC-swell) which plays a pivotal role in the process of regulatory volume decrease (RVD) in the brain through the efflux of anions like chloride and organic osmolytes like glutamate. The polypeptide is Protein tweety homolog 1 (Ttyh1) (Rattus norvegicus (Rat)).